The sequence spans 406 residues: Vacuole membrane protein 1 (406 aa).

The interval 1-22 is disordered; the sequence is MAENGTDCEQRRVGMPKEQNNG. Over 1–42 the chain is Cytoplasmic; that stretch reads MAENGTDCEQRRVGMPKEQNNGSFQDPSFMCNRKRRDREERQ. A helical transmembrane segment spans residues 43–63; sequence SIVLWRKPLITLQYFILEVLI. The Extracellular segment spans residues 64–76; sequence NLKEWSVRLWHRR. Residues 77–97 form a helical membrane-spanning segment; that stretch reads MMVVSVLLLLAVLSVAYYIEG. Topologically, residues 98–110 are cytoplasmic; that stretch reads EHQQCVQYIEKKC. A helical transmembrane segment spans residues 111-131; that stretch reads LWCAYWVGLGILSSVGLGTGL. Residues 132-250 are Extracellular-facing; sequence HTFLLYLGPH…ATRAKLTVQN (119 aa). The segment at 173 to 316 is VTT domain; it reads GTEGAISLWT…FVIITFSKHI (144 aa). Residues 251–271 traverse the membrane as a helical segment; it reads LVQKVGFLGILACASIPNPLF. Topologically, residues 272-273 are cytoplasmic; it reads DL. A helical membrane pass occupies residues 274-294; it reads AGITCGHFLVPFWTFFGATLI. Topologically, residues 295-306 are extracellular; that stretch reads GKAIIKMHIQKL. A helical membrane pass occupies residues 307–327; that stretch reads FVIITFSKHIVEQMVSLIGVI. Residues 328–363 lie on the Cytoplasmic side of the membrane; it reads PSIGPSLQKPFQEYLEAQRKKLHHKGDSGTPQSENW. Residues 364–384 form a helical membrane-spanning segment; it reads LSWAFEKLVIIMVFYFILSII. Residues 385–406 are Extracellular-facing; the sequence is NSMAQSYAKRVQQKKLSVEKTK.

This sequence belongs to the VMP1 family.

The protein resides in the endoplasmic reticulum-Golgi intermediate compartment membrane. It is found in the cell membrane. Its subcellular location is the vacuole membrane. The protein localises to the endoplasmic reticulum membrane. The catalysed reaction is a 1,2-diacyl-sn-glycero-3-phospho-L-serine(in) = a 1,2-diacyl-sn-glycero-3-phospho-L-serine(out). The enzyme catalyses cholesterol(in) = cholesterol(out). It carries out the reaction a 1,2-diacyl-sn-glycero-3-phosphocholine(in) = a 1,2-diacyl-sn-glycero-3-phosphocholine(out). It catalyses the reaction a 1,2-diacyl-sn-glycero-3-phosphoethanolamine(in) = a 1,2-diacyl-sn-glycero-3-phosphoethanolamine(out). In terms of biological role, phospholipid scramblase involved in lipid homeostasis and membrane dynamics processes. Has phospholipid scramblase activity toward cholesterol and phosphatidylserine, as well as phosphatidylethanolamine and phosphatidylcholine. Required for autophagosome formation: participates in early stages of autophagosome biogenesis at the endoplasmic reticulum (ER) membrane by reequilibrating the leaflets of the ER as lipids are extracted by atg2 (atg2a or atg2b) to mediate autophagosome assembly. In addition to autophagy, involved in other processes in which phospholipid scramblase activity is required. Modulates ER contacts with lipid droplets, mitochondria and endosomes. This is Vacuole membrane protein 1 from Xenopus laevis (African clawed frog).